Here is a 589-residue protein sequence, read N- to C-terminus: Pentalenolactone D synthase (589 aa).

FAD is bound by residues 60–61 (IG), 82–83 (DE), 90–91 (TW), 102–103 (DV), tyrosine 108, valine 152, and methionine 491.

This sequence belongs to the FAD-binding monooxygenase family. FAD serves as cofactor.

The enzyme catalyses 1-deoxy-11-oxopentalenate + NADPH + O2 + H(+) = pentalenolactone D + NADP(+) + H2O. The protein operates within antibiotic biosynthesis; pentalenolactone biosynthesis. Catalyzes the flavin-dependent Baeyer-Villiger oxidation of 1-deoxy-11-oxopentalenic acid to pentalenolactone D in the biosynthesis of pentalenolactone antibiotic. In Streptomyces arenae, this protein is Pentalenolactone D synthase (pntE).